A 207-amino-acid chain; its full sequence is UPF0319 protein VV2327 (207 aa).

The N-terminal stretch at 1–18 (MLRVLGLAGMLMSFNIHA) is a signal peptide.

The protein belongs to the UPF0319 family.

The chain is UPF0319 protein VV2327 from Vibrio vulnificus (strain YJ016).